The sequence spans 550 residues: Hydroxylamine reductase (550 aa).

The [2Fe-2S] cluster site is built by Cys-3, Cys-6, Cys-18, and Cys-25. Positions 249, 273, 317, 405, 433, 458, 492, and 494 each coordinate hybrid [4Fe-2O-2S] cluster. Cys-405 carries the post-translational modification Cysteine persulfide.

This sequence belongs to the HCP family. It depends on [2Fe-2S] cluster as a cofactor. Requires hybrid [4Fe-2O-2S] cluster as cofactor.

The protein resides in the cytoplasm. It carries out the reaction A + NH4(+) + H2O = hydroxylamine + AH2 + H(+). Functionally, catalyzes the reduction of hydroxylamine to form NH(3) and H(2)O. The protein is Hydroxylamine reductase of Salmonella choleraesuis (strain SC-B67).